Consider the following 1190-residue polypeptide: Phosphatidylinositol-3,5-bisphosphate 3-phosphatase MTMR4 (1190 aa).

Position 8 is a phosphoserine (Ser-8). Residues 153–570 form the Myotubularin phosphatase domain; it reads EHIRCRQEAE…RALHLWTAVY (418 aa). A 1,2-diacyl-sn-glycero-3-phospho-(1D-myo-inositol-3,5-bisphosphate) is bound by residues Asn-320, Asn-345, and Ile-346. A 1,2-diacyl-sn-glycero-3-phospho-(1D-myo-inositol-3-phosphate) contacts are provided by Asn-320, Asn-345, and Ile-346. The active-site Phosphocysteine intermediate is Cys-407. Residues Ser-408, Asp-409, Gly-410, Trp-411, Asp-412, Arg-413, Lys-449, and Arg-453 each coordinate a 1,2-diacyl-sn-glycero-3-phospho-(1D-myo-inositol-3,5-bisphosphate). Positions 408, 409, 410, 411, 412, and 413 each coordinate a 1,2-diacyl-sn-glycero-3-phospho-(1D-myo-inositol-3-phosphate). Arg-453 is an a 1,2-diacyl-sn-glycero-3-phospho-(1D-myo-inositol-3-phosphate) binding site. 2 positions are modified to phosphoserine: Ser-610 and Ser-629. Disordered stretches follow at residues 616–694, 724–749, and 773–848; these read SACD…FKGH, ETEA…GKPP, and DFPE…PSSV. Residues 618–637 are compositionally biased toward polar residues; that stretch reads CDTSSPLTRTSSDPNLNNHS. Positions 782–847 are enriched in polar residues; the sequence is LTGTPQQPHL…SISHQEQPSS (66 aa). The PY-motif; substrate motif for NEDD4 motif lies at 999-1003; it reads VPPLY. A coiled-coil region spans residues 1020-1052; sequence LRQIEAGYRQEVEQLRRQVRELQMRLDIRHCCA. An FYVE-type zinc finger spans residues 1109–1169; the sequence is DHMASHCFNC…VCNSCYEHIQ (61 aa). Residues Cys-1115, Cys-1118, Cys-1131, Cys-1134, Cys-1139, Cys-1142, Cys-1161, and Cys-1164 each contribute to the Zn(2+) site.

It belongs to the protein-tyrosine phosphatase family. Non-receptor class myotubularin subfamily. As to quaternary structure, homooligomeric. Forms MTMR3:MTMR4 heterooligomers; regulates the localization of both proteins. The MTMR3:MTMR4 heterooligomer can also recruit both CEP55 and PLK1; occurs during early mitosis, regulates the phosphorylation of CEP55 by PLK1 and its recruitment to the midbody where it can mediate cell abscission. Interacts with SMAD2 and SMAD3; negatively regulates TGF-beta signaling through SMAD2 and SMAD3 dephosphorylation and retention in endosomes. Interacts with SMAD1; negatively regulates BMP signaling through SMAD1 dephosphorylation and retention in endosomes. Post-translationally, ubiquitinated. Ubiquitination by NEDD4 probably leads to proteasomal degradation. In terms of processing, phosphorylated by CDK1 during mitosis.

The protein localises to the early endosome membrane. It localises to the recycling endosome membrane. The protein resides in the late endosome membrane. Its subcellular location is the cytoplasmic vesicle. It is found in the phagosome membrane. The enzyme catalyses a 1,2-diacyl-sn-glycero-3-phospho-(1D-myo-inositol-3-phosphate) + H2O = a 1,2-diacyl-sn-glycero-3-phospho-(1D-myo-inositol) + phosphate. It catalyses the reaction a 1,2-diacyl-sn-glycero-3-phospho-(1D-myo-inositol-3,5-bisphosphate) + H2O = a 1,2-diacyl-sn-glycero-3-phospho-(1D-myo-inositol-5-phosphate) + phosphate. The catalysed reaction is 1,2-dioctanoyl-sn-glycero-3-phospho-(1-D-myo-inositol-3-phosphate) + H2O = 1,2-dioctanoyl-sn-glycero-3-phospho-(1D-myo-inositol) + phosphate. It carries out the reaction 1,2-dioctanoyl-sn-glycero-3-phospho-(1D-myo-inositol-3,5-bisphosphate) + H2O = 1,2-dioctanoyl-sn-glycero-3-phospho-(1D-myo-inositol-5-phosphate) + phosphate. Functionally, lipid phosphatase that specifically dephosphorylates the D-3 position of phosphatidylinositol 3-phosphate and phosphatidylinositol 3,5-bisphosphate, generating phosphatidylinositol and phosphatidylinositol 5-phosphate. Decreases the levels of phosphatidylinositol 3-phosphate, a phospholipid found in cell membranes where it acts as key regulator of both cell signaling and intracellular membrane traffic, in a subset of endosomal membranes to negatively regulate both endocytic recycling and trafficking and/or maturation of endosomes toward lysosomes. Through phosphatidylinositol 3-phosphate turnover in phagosome membranes regulates phagocytosis and phagosome maturation. By decreasing phosphatidylinositol 3-monophosphate (PI3P) levels in immune cells it can also regulate the innate immune response. Beside its lipid phosphatase activity, can also function as a molecular adapter to regulate midbody abscission during mitotic cytokinesis. Can also negatively regulate TGF-beta and BMP signaling through Smad proteins dephosphorylation and retention in endosomes. This is Phosphatidylinositol-3,5-bisphosphate 3-phosphatase MTMR4 from Mus musculus (Mouse).